Here is a 292-residue protein sequence, read N- to C-terminus: Xyloglucan endotransglucosylase/hydrolase protein 2 (292 aa).

The signal sequence occupies residues 1 to 24 (MNRIRYCFELVSVLFLMFTANARA). Residues 25 to 219 (RGRGAIDFDV…WAYAPFKAQY (195 aa)) form the GH16 domain. The active-site Nucleophile is E106. The active-site Proton donor is E110. Xyloglucan-binding positions include E110, 123-125 (QTN), 133-135 (GRE), 198-199 (NW), and G203. 2 disulfide bridges follow: C227/C239 and C275/C288. Position 280 (R280) interacts with xyloglucan.

This sequence belongs to the glycosyl hydrolase 16 family. XTH group 1 subfamily. In terms of processing, contains at least one intrachain disulfide bond essential for its enzymatic activity.

The protein resides in the secreted. Its subcellular location is the cell wall. It is found in the extracellular space. It localises to the apoplast. It carries out the reaction breaks a beta-(1-&gt;4) bond in the backbone of a xyloglucan and transfers the xyloglucanyl segment on to O-4 of the non-reducing terminal glucose residue of an acceptor, which can be a xyloglucan or an oligosaccharide of xyloglucan.. May catalyze xyloglucan endohydrolysis (XEH) and/or endotransglycosylation (XET). Cleaves and religates xyloglucan polymers, an essential constituent of the primary cell wall, and thereby participates in cell wall construction of growing tissues. The protein is Xyloglucan endotransglucosylase/hydrolase protein 2 (XTH2) of Arabidopsis thaliana (Mouse-ear cress).